The following is a 92-amino-acid chain: Phospholemman (92 aa).

The signal sequence occupies residues 1 to 20 (MASLSHILVLCVGLLAMVNA). Topologically, residues 21-35 (EAPQEHDPFTYDYQS) are extracellular. A helical membrane pass occupies residues 36–56 (LRIGGLIIAGILFILGILIVL). Residues 57–92 (SRRCRCKFNQQQRTGEPDEEEGTFRSSIRRLSTRRR) are Cytoplasmic-facing. Residue cysteine 60 is the site of S-palmitoyl cysteine attachment. Cysteine 62 carries the post-translational modification S-glutathionyl cysteine; alternate. The S-palmitoyl cysteine; alternate moiety is linked to residue cysteine 62. The interval 65-92 (NQQQRTGEPDEEEGTFRSSIRRLSTRRR) is disordered. Phosphothreonine is present on threonine 79. Serine 82 bears the Phosphoserine mark. Residue serine 83 is modified to Phosphoserine; by PKA and PKC. Positions 83-92 (SIRRLSTRRR) are enriched in basic residues. The residue at position 88 (serine 88) is a Phosphoserine; by PKA. Phosphothreonine; by PKC is present on threonine 89.

The protein belongs to the FXYD family. Homotetramer. Monomer. Regulatory subunit of the sodium/potassium-transporting ATPase (NKA) which is composed of a catalytic alpha subunit, an auxiliary non-catalytic beta subunit and an additional regulatory subunit. The monomeric form associates with NKA while the oligomeric form does not. Interacts with the catalytic alpha-1 subunit ATP1A1. Also interacts with the catalytic alpha-2 and alpha-3 subunits ATP1A2 and ATP1A3. Very little interaction with ATP1A1, ATP1A2 or ATP1A3 when phosphorylated at Ser-83. Interacts with the non-catalytic beta-1 subunit ATP1B1. Oxidative stress decreases interaction with ATP1A1 but increases interaction with ATP1B1. In terms of processing, major plasma membrane substrate for cAMP-dependent protein kinase (PKA) and protein kinase C (PKC) in several different tissues. Phosphorylated in response to insulin and adrenergic stimulation. Phosphorylation at Ser-88 stimulates sodium/potassium-transporting ATPase activity while the unphosphorylated form inhibits sodium/potassium-transporting ATPase activity. Phosphorylation increases tetramerization, decreases binding to ATP1A1 and reduces inhibition of ATP1A1 activity. Phosphorylation at Ser-83 leads to greatly reduced interaction with ATP1A1, ATP1A2 and ATP1A3. May be phosphorylated by DMPK. Palmitoylation increases half-life and stability and is enhanced upon phosphorylation at Ser-88 by PKA. In terms of tissue distribution, in the brain, detected in cerebellum and choroid plexus (at protein level).

The protein resides in the cell membrane. The protein localises to the sarcolemma. It localises to the apical cell membrane. Its subcellular location is the membrane. It is found in the caveola. The protein resides in the T-tubule. In terms of biological role, associates with and regulates the activity of the sodium/potassium-transporting ATPase (NKA) which transports Na(+) out of the cell and K(+) into the cell. Inhibits NKA activity in its unphosphorylated state and stimulates activity when phosphorylated. Reduces glutathionylation of the NKA beta-1 subunit ATP1B1, thus reversing glutathionylation-mediated inhibition of ATP1B1. Contributes to female sexual development by maintaining the excitability of neurons which secrete gonadotropin-releasing hormone. The protein is Phospholemman of Bos taurus (Bovine).